Consider the following 426-residue polypeptide: Glutamyl-tRNA reductase (426 aa).

Substrate-binding positions include 49 to 52 (TCNR), S110, 115 to 117 (EAQ), and Q121. Catalysis depends on C50, which acts as the Nucleophile. Position 191 to 196 (191 to 196 (GAGEMA)) interacts with NADP(+).

Belongs to the glutamyl-tRNA reductase family. In terms of assembly, homodimer.

The enzyme catalyses (S)-4-amino-5-oxopentanoate + tRNA(Glu) + NADP(+) = L-glutamyl-tRNA(Glu) + NADPH + H(+). The protein operates within porphyrin-containing compound metabolism; protoporphyrin-IX biosynthesis; 5-aminolevulinate from L-glutamyl-tRNA(Glu): step 1/2. Catalyzes the NADPH-dependent reduction of glutamyl-tRNA(Glu) to glutamate 1-semialdehyde (GSA). The polypeptide is Glutamyl-tRNA reductase (Rhodopirellula baltica (strain DSM 10527 / NCIMB 13988 / SH1)).